Here is an 89-residue protein sequence, read N- to C-terminus: UPF0367 protein CYA_1023 (89 aa).

A disordered region spans residues 69-89 (TKSGGPGAPGTRPGFLAQLQG).

This sequence belongs to the UPF0367 family.

In Synechococcus sp. (strain JA-3-3Ab) (Cyanobacteria bacterium Yellowstone A-Prime), this protein is UPF0367 protein CYA_1023.